The sequence spans 108 residues: Nucleoid-associated protein Bpet3552 (108 aa).

The protein belongs to the YbaB/EbfC family. As to quaternary structure, homodimer.

Its subcellular location is the cytoplasm. It is found in the nucleoid. Binds to DNA and alters its conformation. May be involved in regulation of gene expression, nucleoid organization and DNA protection. The protein is Nucleoid-associated protein Bpet3552 of Bordetella petrii (strain ATCC BAA-461 / DSM 12804 / CCUG 43448).